Reading from the N-terminus, the 123-residue chain is Histone H2B.3 (123 aa).

Positions 1-30 are disordered; that stretch reads MPPKVSGKAAKKAGKAQKNISKGDKKKNRK. Residue Ser-110 is glycosylated (O-linked (GlcNAc) serine). Residue Lys-118 forms a Glycyl lysine isopeptide (Lys-Gly) (interchain with G-Cter in ubiquitin) linkage.

Belongs to the histone H2B family. The nucleosome is a histone octamer containing two molecules each of H2A, H2B, H3 and H4 assembled in one H3-H4 heterotetramer and two H2A-H2B heterodimers. The octamer wraps approximately 147 bp of DNA. In terms of processing, monoubiquitination of Lys-118 gives a specific tag for epigenetic transcriptional activation and is also prerequisite for histone H3 'Lys-4' and 'Lys-79' methylation. Post-translationally, glcNAcylation at Ser-110 promotes monoubiquitination of Lys-118. It fluctuates in response to extracellular glucose, and associates with transcribed genes.

Its subcellular location is the nucleus. It is found in the chromosome. Its function is as follows. Core component of nucleosome. Nucleosomes wrap and compact DNA into chromatin, limiting DNA accessibility to the cellular machineries which require DNA as a template. Histones thereby play a central role in transcription regulation, DNA repair, DNA replication and chromosomal stability. DNA accessibility is regulated via a complex set of post-translational modifications of histones, also called histone code, and nucleosome remodeling. This Tigriopus californicus (Marine copepod) protein is Histone H2B.3.